The sequence spans 410 residues: Probable nicotinate phosphoribosyltransferase (410 aa).

Nicotinate is bound by residues Tyr-15, Phe-170, and Thr-220. Residue His-223 is modified to Phosphohistidine. Thr-348 lines the 5-phospho-alpha-D-ribose 1-diphosphate pocket.

It belongs to the NAPRTase family. It depends on Mg(2+) as a cofactor. The cofactor is Mn(2+). In terms of processing, transiently phosphorylated on a His residue during the reaction cycle. Phosphorylation strongly increases the affinity for substrates and increases the rate of nicotinate D-ribonucleotide production. Dephosphorylation regenerates the low-affinity form of the enzyme, leading to product release.

It catalyses the reaction nicotinate + 5-phospho-alpha-D-ribose 1-diphosphate + ATP + H2O = nicotinate beta-D-ribonucleotide + ADP + phosphate + diphosphate. Its pathway is cofactor biosynthesis; NAD(+) biosynthesis; nicotinate D-ribonucleotide from nicotinate: step 1/1. Its function is as follows. Catalyzes the first step in the biosynthesis of NAD from nicotinic acid, the ATP-dependent synthesis of beta-nicotinate D-ribonucleotide from nicotinate and 5-phospho-D-ribose 1-phosphate. Helps prevent cellular oxidative stress via its role in NAD biosynthesis. The sequence is that of Probable nicotinate phosphoribosyltransferase from Schizosaccharomyces pombe (strain 972 / ATCC 24843) (Fission yeast).